The primary structure comprises 626 residues: (+)-3-carene synthase 1, chloroplastic (626 aa).

A chloroplast-targeting transit peptide spans 1–45; that stretch reads MSLISAVPLASSCVSKSLISSVREHKALRRAIATLQMSRPGKSVA. 3 residues coordinate Mg(2+): aspartate 377, aspartate 381, and aspartate 529. Positions 377–381 match the DDXXD motif motif; the sequence is DDMYD.

The protein belongs to the terpene synthase family. Tpsd subfamily. The cofactor is Mg(2+). Requires Mn(2+) as cofactor.

It is found in the plastid. It localises to the chloroplast. It catalyses the reaction (2E)-geranyl diphosphate = (+)-car-3-ene + diphosphate. The catalysed reaction is (2E)-geranyl diphosphate = terpinolene + diphosphate. It participates in terpene metabolism; oleoresin biosynthesis. It functions in the pathway secondary metabolite biosynthesis; terpenoid biosynthesis. Its function is as follows. Monoterpene synthase (TPS) involved in the biosynthesis of monoterpene natural products included in conifer oleoresin secretions and volatile emissions; these compounds contribute to biotic and abiotic stress defense against herbivores and pathogens. Catalyzes the conversion of (2E)-geranyl diphosphate (GPP) to (+)-3-carene and, to a lower extent, to terpinolene. In Pinus banksiana (Jack pine), this protein is (+)-3-carene synthase 1, chloroplastic.